Here is a 314-residue protein sequence, read N- to C-terminus: Ribosomal RNA small subunit methyltransferase H (314 aa).

S-adenosyl-L-methionine is bound by residues Gly37–His39, Asp57, Phe84, Asp105, and Gln112.

Belongs to the methyltransferase superfamily. RsmH family.

The protein localises to the cytoplasm. The catalysed reaction is cytidine(1402) in 16S rRNA + S-adenosyl-L-methionine = N(4)-methylcytidine(1402) in 16S rRNA + S-adenosyl-L-homocysteine + H(+). Its function is as follows. Specifically methylates the N4 position of cytidine in position 1402 (C1402) of 16S rRNA. This is Ribosomal RNA small subunit methyltransferase H from Fusobacterium nucleatum subsp. nucleatum (strain ATCC 25586 / DSM 15643 / BCRC 10681 / CIP 101130 / JCM 8532 / KCTC 2640 / LMG 13131 / VPI 4355).